A 471-amino-acid chain; its full sequence is Ribosome biogenesis protein YTM1 (471 aa).

A ubiquitin-like (UBL) domain region spans residues 10–92; it reads VTARFTTRDE…ETRLEVEYTR (83 aa). WD repeat units lie at residues 119–158, 165–203, and 210–249; these read SRAG…LATS, GRIT…RTIT, and SHRW…NPVA. Residues 245–274 form a disordered region; that stretch reads ENPVAPSSLLPNSTAASNKRQKLSKPDRTV. The segment covering 253–262 has biased composition (polar residues); that stretch reads LLPNSTAASN. WD repeat units follow at residues 285-325, 327-366, 372-412, and 436-471; these read GHSS…CVDT, TTGH…TQIS, GHKN…TGGQ, and GHGE…ALGS. Positions 412-440 are disordered; sequence QVGEGQQGESVHTIHRQGQSGPGKGHGEG.

This sequence belongs to the WD repeat WDR12/YTM1 family. Component of the NOP7 complex, composed of ERB1, NOP7 and YTM1. The complex is held together by ERB1, which interacts with NOP7 via its N-terminal domain and with YTM1 via a high-affinity interaction between the seven-bladed beta-propeller domains of the 2 proteins. The NOP7 complex associates with the 66S pre-ribosome. Interacts (via UBL domain) with MDN1 (via VWFA/MIDAS domain).

Its subcellular location is the nucleus. The protein resides in the nucleolus. It localises to the nucleoplasm. Functionally, component of the NOP7 complex, which is required for maturation of the 25S and 5.8S ribosomal RNAs and formation of the 60S ribosome. In Phaeosphaeria nodorum (strain SN15 / ATCC MYA-4574 / FGSC 10173) (Glume blotch fungus), this protein is Ribosome biogenesis protein YTM1.